Consider the following 823-residue polypeptide: Kinesin-like protein KIN-7N (823 aa).

One can recognise a Kinesin motor domain in the interval 3–325 (KICVAVRVRP…LQFASRAKRI (323 aa)). 83–90 (GQTSSGKT) contributes to the ATP binding site. Coiled-coil stretches lie at residues 341-414 (LKRQ…NLNN), 527-557 (RENHSEVEDLKSRIQLLTNENDSLQVKFNEQ), and 696-786 (EKKL…MEEE).

The protein belongs to the TRAFAC class myosin-kinesin ATPase superfamily. Kinesin family. KIN-7 subfamily.

This Arabidopsis thaliana (Mouse-ear cress) protein is Kinesin-like protein KIN-7N.